The primary structure comprises 101 residues: Alkene monooxygenase system, effector subunit (101 aa).

It belongs to the TmoD/XamoD family. Monomer. The alkene monooxygenase multicomponent enzyme system is composed of an electron transfer component and a monooxygenase component interacting with the effector protein XamoD. The electron transfer component is composed of a ferredoxin reductase (XamoF) and a ferredoxin (XamoC), and the monooxygenase component is formed by a heterohexamer (dimer of heterotrimers) of two alpha subunits (XamoA), two beta subunits (XamoE) and two gamma subunits (XamoB).

The protein localises to the cytoplasm. In terms of biological role, effector component of the alkene monooxygenase multicomponent enzyme system which catalyzes the O2- and NADH-dependent epoxidation of short chain (C2 to C6) alkenes to their corresponding epoxides. One possible role of this small protein might be to facilitate electron transfer between the reductase and ferredoxin components. The chain is Alkene monooxygenase system, effector subunit from Xanthobacter autotrophicus (strain ATCC BAA-1158 / Py2).